Reading from the N-terminus, the 147-residue chain is Hemoglobin anodic subunit beta (147 aa).

In terms of domain architecture, Globin spans 2–147 (EWTDGERTAI…VTSALARQYH (146 aa)). Residues His63 and His92 each contribute to the heme b site.

It belongs to the globin family. In terms of assembly, heterotetramer of two alpha chains and two beta chains. In terms of tissue distribution, red blood cells.

Its function is as follows. Involved in oxygen transport from gills to the various peripheral tissues. The sequence is that of Hemoglobin anodic subunit beta from Gymnothorax unicolor (Brown moray).